Reading from the N-terminus, the 284-residue chain is MRSVGNVDLTIGLVTVPVKMVGVSESHDRKASMYHPHEDGNFGKIKMPKLCEDCGEVVPTADIAKGFEEGGDIVILTADELASIAAATGAALEVPQFVKAEQINPMLFANENIYRLVPDPKRGRQAATTYLMVRHILVSQELVGVVQYTRWGRNRLGVLDVEPSDDGGVLVIRNMMWADELRSTEGIVPTNVTEDDIDPRLLPVMASVVESMTGDWDPTAYTDRYTEQLSEAITAKAQGDEIATVASESGKAIDDVSDLLAKLEASIQKKAPAKKATARRKKTA.

A Ku domain is found at 10 to 189; it reads TIGLVTVPVK…ELRSTEGIVP (180 aa).

Homodimer. Interacts with host LigD.

Required for replication of viruses with short cos ends (4 bases). Stimulates dsDNA end-joining by host LigD. Binds dsDNA with either blunt, 5'- or 3-overhangs, protecting it from host exonuclease degradation. The sequence is that of Protein Ku (87) from Mycobacterium phage Corndog (Mycobacteriophage Corndog).